The following is a 284-amino-acid chain: UPF0276 protein Ping_0944 (284 aa).

The protein belongs to the UPF0276 family.

The polypeptide is UPF0276 protein Ping_0944 (Psychromonas ingrahamii (strain DSM 17664 / CCUG 51855 / 37)).